The sequence spans 219 residues: Ribose-5-phosphate isomerase A (219 aa).

Substrate-binding positions include 28-31 (TGST), 81-84 (DGAD), and 94-97 (KGGG). E103 serves as the catalytic Proton acceptor. Residue K121 participates in substrate binding.

The protein belongs to the ribose 5-phosphate isomerase family. As to quaternary structure, homodimer.

The catalysed reaction is aldehydo-D-ribose 5-phosphate = D-ribulose 5-phosphate. It participates in carbohydrate degradation; pentose phosphate pathway; D-ribose 5-phosphate from D-ribulose 5-phosphate (non-oxidative stage): step 1/1. Its function is as follows. Catalyzes the reversible conversion of ribose-5-phosphate to ribulose 5-phosphate. The protein is Ribose-5-phosphate isomerase A of Edwardsiella ictaluri (strain 93-146).